Here is a 154-residue protein sequence, read N- to C-terminus: MAARLCCQLDPARDVLCLRPVGAESSGRTLPGSLGAVPPPSSSAVPADNGSHLSLRGLPVCSFSSAGPCALRFTSARRMETTVNAPWSLPTVLHKRTLGLSGRSMTWIEDYIKDCVFKDWEELGEEIRLKVFVLGGCRHKLVCSPAPCNFFTSA.

Positions arginine 28–aspartate 48 are disordered. The segment covering leucine 30 to proline 46 has biased composition (low complexity). The tract at residues proline 68–phenylalanine 117 is mitochondrial targeting sequence.

It belongs to the orthohepadnavirus protein X family. May form homodimer. May interact with host CEBPA, CFLAR, CREB1, DDB1, E4F1, HBXIP, HSPD1/HSP60, NFKBIA, POLR2E and SMAD4. Interacts with host SMC5-SMC6 complex and induces its degradation. Interacts with host TRPC4AP; leading to prevent ubiquitination of TRPC4AP. Interacts with host PLSCR1; this interaction promotes ubiquitination and degradation of HBx and impairs HBx-mediated cell proliferation. A fraction may be phosphorylated in insect cells and HepG2 cells, a human hepatoblastoma cell line. Phosphorylated in vitro by host protein kinase C or mitogen-activated protein kinase. N-acetylated in insect cells.

The protein localises to the host cytoplasm. It localises to the host nucleus. Its subcellular location is the host mitochondrion. Its function is as follows. Multifunctional protein that plays a role in silencing host antiviral defenses and promoting viral transcription. Does not seem to be essential for HBV infection. May be directly involved in development of cirrhosis and liver cancer (hepatocellular carcinoma). Most of cytosolic activities involve modulation of cytosolic calcium. The effect on apoptosis is controversial depending on the cell types in which the studies have been conducted. May induce apoptosis by localizing in mitochondria and causing loss of mitochondrial membrane potential. May also modulate apoptosis by binding host CFLAR, a key regulator of the death-inducing signaling complex (DISC). Promotes viral transcription by using the host E3 ubiquitin ligase DDB1 to target the SMC5-SMC6 complex to proteasomal degradation. This host complex would otherwise bind to viral episomal DNA, and prevents its transcription. Moderately stimulates transcription of many different viral and cellular transcription elements. Promoters and enhancers stimulated by HBx contain DNA binding sites for NF-kappa-B, AP-1, AP-2, c-EBP, ATF/CREB, or the calcium-activated factor NF-AT. The chain is Protein X from Homo sapiens (Human).